Consider the following 586-residue polypeptide: Aspartate--tRNA ligase (586 aa).

Residue Glu171 participates in L-aspartate binding. The tract at residues 195-198 (QLFK) is aspartate. Arg217 contacts L-aspartate. Residues 217–219 (RDE) and Gln226 contribute to the ATP site. L-aspartate is bound at residue His448. Glu482 provides a ligand contact to ATP. Residue Arg489 coordinates L-aspartate. 534–537 (GLDR) contacts ATP.

This sequence belongs to the class-II aminoacyl-tRNA synthetase family. Type 1 subfamily. In terms of assembly, homodimer.

Its subcellular location is the cytoplasm. The catalysed reaction is tRNA(Asp) + L-aspartate + ATP = L-aspartyl-tRNA(Asp) + AMP + diphosphate. Its function is as follows. Catalyzes the attachment of L-aspartate to tRNA(Asp) in a two-step reaction: L-aspartate is first activated by ATP to form Asp-AMP and then transferred to the acceptor end of tRNA(Asp). This Buchnera aphidicola subsp. Acyrthosiphon pisum (strain 5A) protein is Aspartate--tRNA ligase.